We begin with the raw amino-acid sequence, 351 residues long: L-threonine 3-dehydrogenase (351 aa).

Position 39 (Cys39) interacts with Zn(2+). Residues Thr41 and His44 each act as charge relay system in the active site. Residues His64, Glu65, Cys94, Cys97, Cys100, and Cys108 each coordinate Zn(2+). Residues Ile176, Asp196, Arg201, 271–273 (LGI), and 295–296 (IY) contribute to the NAD(+) site.

The protein belongs to the zinc-containing alcohol dehydrogenase family. As to quaternary structure, homotetramer. Zn(2+) is required as a cofactor.

It localises to the cytoplasm. The catalysed reaction is L-threonine + NAD(+) = (2S)-2-amino-3-oxobutanoate + NADH + H(+). The protein operates within amino-acid degradation; L-threonine degradation via oxydo-reductase pathway; glycine from L-threonine: step 1/2. Its function is as follows. Catalyzes the NAD(+)-dependent oxidation of L-threonine to 2-amino-3-ketobutyrate. This is L-threonine 3-dehydrogenase from Francisella tularensis subsp. tularensis (strain SCHU S4 / Schu 4).